The primary structure comprises 141 residues: Arsenate reductase (141 aa).

Residue Cys-12 is the Nucleophile; cysteine thioarsenate intermediate of the active site.

Belongs to the ArsC family.

It catalyses the reaction [glutaredoxin]-dithiol + arsenate + glutathione + H(+) = glutathionyl-S-S-[glutaredoxin] + arsenite + H2O. Involved in resistance to arsenate. Catalyzes the reduction of arsenate [As(V)] to arsenite [As(III)]. The polypeptide is Arsenate reductase (Escherichia coli).